The primary structure comprises 201 residues: Recombination protein RecR (201 aa).

The C4-type zinc finger occupies 57-74; it reads CRICGFITSKDDDPCVIC. One can recognise a Toprim domain in the interval 82-178; that stretch reads SKIFVVENSQ…KVTRLARGLS (97 aa).

The protein belongs to the RecR family.

In terms of biological role, may play a role in DNA repair. It seems to be involved in an RecBC-independent recombinational process of DNA repair. It may act with RecF and RecO. The polypeptide is Recombination protein RecR (Oenococcus oeni (strain ATCC BAA-331 / PSU-1)).